The sequence spans 338 residues: Ferrochelatase (338 aa).

The Fe cation site is built by H202 and E283.

It belongs to the ferrochelatase family.

It localises to the cytoplasm. It carries out the reaction heme b + 2 H(+) = protoporphyrin IX + Fe(2+). It functions in the pathway porphyrin-containing compound metabolism; protoheme biosynthesis; protoheme from protoporphyrin-IX: step 1/1. In terms of biological role, catalyzes the ferrous insertion into protoporphyrin IX. This chain is Ferrochelatase, found in Acinetobacter baumannii (strain ATCC 17978 / DSM 105126 / CIP 53.77 / LMG 1025 / NCDC KC755 / 5377).